We begin with the raw amino-acid sequence, 214 residues long: Probable transaldolase (214 aa).

Catalysis depends on Lys83, which acts as the Schiff-base intermediate with substrate.

This sequence belongs to the transaldolase family. Type 3B subfamily.

It localises to the cytoplasm. It carries out the reaction D-sedoheptulose 7-phosphate + D-glyceraldehyde 3-phosphate = D-erythrose 4-phosphate + beta-D-fructose 6-phosphate. The protein operates within carbohydrate degradation; pentose phosphate pathway; D-glyceraldehyde 3-phosphate and beta-D-fructose 6-phosphate from D-ribose 5-phosphate and D-xylulose 5-phosphate (non-oxidative stage): step 2/3. Its function is as follows. Transaldolase is important for the balance of metabolites in the pentose-phosphate pathway. In Carboxydothermus hydrogenoformans (strain ATCC BAA-161 / DSM 6008 / Z-2901), this protein is Probable transaldolase.